The chain runs to 378 residues: Succinyl-diaminopimelate desuccinylase (378 aa).

H68 lines the Zn(2+) pocket. The active site involves D70. Zn(2+) is bound at residue D101. E135 acts as the Proton acceptor in catalysis. Residues E136, E164, and H350 each contribute to the Zn(2+) site.

It belongs to the peptidase M20A family. DapE subfamily. As to quaternary structure, homodimer. It depends on Zn(2+) as a cofactor. The cofactor is Co(2+).

It carries out the reaction N-succinyl-(2S,6S)-2,6-diaminopimelate + H2O = (2S,6S)-2,6-diaminopimelate + succinate. It participates in amino-acid biosynthesis; L-lysine biosynthesis via DAP pathway; LL-2,6-diaminopimelate from (S)-tetrahydrodipicolinate (succinylase route): step 3/3. Functionally, catalyzes the hydrolysis of N-succinyl-L,L-diaminopimelic acid (SDAP), forming succinate and LL-2,6-diaminopimelate (DAP), an intermediate involved in the bacterial biosynthesis of lysine and meso-diaminopimelic acid, an essential component of bacterial cell walls. The chain is Succinyl-diaminopimelate desuccinylase from Vibrio atlanticus (strain LGP32) (Vibrio splendidus (strain Mel32)).